The primary structure comprises 547 residues: uncharacterized protein (547 aa).

The Cytoplasmic segment spans residues 1-19; the sequence is MVRLNHAASYFMPIFCSTR. The helical transmembrane segment at 20–40 threads the bilayer; sequence PHIVILSALFSISLFSLFYAS. Residues 41–64 are Vacuolar-facing; the sequence is SELLLHQYDDPLMFKPNSQDYFRT. The chain crosses the membrane as a helical span at residues 65–85; it reads FLLGLFSPFLYYFLKTFLFNI. At 86–89 the chain is on the cytoplasmic side; sequence NQRF. Residues 90-110 traverse the membrane as a helical segment; that stretch reads LILNLIVDFPINDVFMLLILI. Residues 111–139 are Vacuolar-facing; it reads GLAYPQVQDHEGGTIKHKECSWHIIPRQA. The chain crosses the membrane as a helical span at residues 140 to 160; the sequence is YIFGISWALGEFTICIIGNLF. Over 161–340 the chain is Cytoplasmic; the sequence is NYQEIADPNI…RFIAFSTAYQ (180 aa). Serine 225 is modified (phosphoserine). Positions 237–271 are disordered; it reads PIKPLRSSSSTYGSIRQQPHENKKQLHVPDNSQDD. Over residues 242–253 the composition is skewed to polar residues; the sequence is RSSSSTYGSIRQ. The chain crosses the membrane as a helical span at residues 341 to 361; it reads LVTGLLLMILVVGSNIMLTIG. The Vacuolar portion of the chain corresponds to 362-394; it reads ESLILSMYFVYVRGHEGLFTPVVNYFGSRTISN. The chain crosses the membrane as a helical span at residues 395 to 415; sequence FILCVIIPFISLNFLINTSIY. Topologically, residues 416–523 are cytoplasmic; the sequence is LRRELDDWFN…NWRALARNDS (108 aa). A helical transmembrane segment spans residues 524–544; the sequence is FVLGVMVSWSLLVFVTGILST. Over 545 to 547 the chain is Vacuolar; the sequence is VYI.

Its subcellular location is the vacuole membrane. This is an uncharacterized protein from Saccharomyces cerevisiae (strain ATCC 204508 / S288c) (Baker's yeast).